We begin with the raw amino-acid sequence, 513 residues long: Xylose import ATP-binding protein XylG (513 aa).

2 ABC transporter domains span residues 5-242 (LEMK…VGRE) and 259-505 (LRIE…LRSE). ATP is bound at residue 37–44 (GENGSGKS).

It belongs to the ABC transporter superfamily. Xylose importer (TC 3.A.1.2.4) family. In terms of assembly, the complex is composed of two ATP-binding proteins (XylG), two transmembrane proteins (XylH) and a solute-binding protein (XylF).

Its subcellular location is the cell inner membrane. It carries out the reaction D-xylose(out) + ATP + H2O = D-xylose(in) + ADP + phosphate + H(+). Functionally, part of the ABC transporter complex XylFGH involved in xylose import. Responsible for energy coupling to the transport system. This is Xylose import ATP-binding protein XylG from Shigella flexneri serotype 5b (strain 8401).